The sequence spans 328 residues: Ketol-acid reductoisomerase (NADP(+)) (328 aa).

The 181-residue stretch at 1 to 181 folds into the KARI N-terminal Rossmann domain; sequence MKIYYENDID…GLARAGVLET (181 aa). NADP(+) contacts are provided by residues 24 to 27, R47, S52, and 82 to 85; these read YGSQ and DEIQ. Residue H107 is part of the active site. Position 133 (G133) interacts with NADP(+). The KARI C-terminal knotted domain maps to 182–327; the sequence is TFREETETDL…SKLRKLCGLE (146 aa). Mg(2+) is bound by residues D190, E194, E226, and E230. Position 251 (S251) interacts with substrate.

Belongs to the ketol-acid reductoisomerase family. Mg(2+) serves as cofactor.

It carries out the reaction (2R)-2,3-dihydroxy-3-methylbutanoate + NADP(+) = (2S)-2-acetolactate + NADPH + H(+). It catalyses the reaction (2R,3R)-2,3-dihydroxy-3-methylpentanoate + NADP(+) = (S)-2-ethyl-2-hydroxy-3-oxobutanoate + NADPH + H(+). It functions in the pathway amino-acid biosynthesis; L-isoleucine biosynthesis; L-isoleucine from 2-oxobutanoate: step 2/4. Its pathway is amino-acid biosynthesis; L-valine biosynthesis; L-valine from pyruvate: step 2/4. Involved in the biosynthesis of branched-chain amino acids (BCAA). Catalyzes an alkyl-migration followed by a ketol-acid reduction of (S)-2-acetolactate (S2AL) to yield (R)-2,3-dihydroxy-isovalerate. In the isomerase reaction, S2AL is rearranged via a Mg-dependent methyl migration to produce 3-hydroxy-3-methyl-2-ketobutyrate (HMKB). In the reductase reaction, this 2-ketoacid undergoes a metal-dependent reduction by NADPH to yield (R)-2,3-dihydroxy-isovalerate. This is Ketol-acid reductoisomerase (NADP(+)) from Methanothermobacter thermautotrophicus (strain ATCC 29096 / DSM 1053 / JCM 10044 / NBRC 100330 / Delta H) (Methanobacterium thermoautotrophicum).